An 883-amino-acid polypeptide reads, in one-letter code: MGFGWQGSVSIAFTALAFVVMAADWVGPDVTFTVLLAFLTAFDGQIVTVAKAAAGYGNTGLLTVIFLYWVAEGITQTGGLELIMNFVLGRSRSVHWALARSMFPVMCLSAFLNNTPCVTFMIPILISWGRRCGVPIKKLLIPLSYASVLGGTCTSIGTSTNLVIVGLQDARYTKAKQLDQAKFQIFDIAPYGVPYALWGFVFILLTQAFLLPGNSSRYAKDLLIAVRVLPSSSVAKKKLKDSGLLQQSGFSVSGIYRDGKYLSKPDPNWVLEPNDILYAAGEFDVVEFVGEEFGLGLVNADAETSAERPFTTGEESVFTPTGGAPYQKLVQATIAPTSDLIGRTVREVSWQGRFGLIPVAIQRGNGREDGRLNDVVLAAGDVLILDTTPFYDEEREDSKNNFAGKVRAVKDGAAKEFVVGVKVKKSSEVVNKTVSAAGLRGIPGLFVLSVDRADGSSVEASDYLYKIQPDDTIWIATDIGAVGFLAKFPGLELVQQEQVDKTGTSILYRHLVQAAVSHKGPIVGKTVRDVRFRTLYNAAVVAVHREGARVPLKVQDIVLQGGDVLLISCHTNWADEHRHDKSFVLLQPVPDSSPPKRSRMVIGVLLATGMVLTQIVGGLKSREYIHLWPAAVLTSALMLLTGCMNADQARKAIYWDVYLTIAAAFGVSAALEGTGVAASFANGIISIGKNLHSDGAALIAIYIATAMLSELLTNNAAGAIMYPIAAIAGDALKISPKETSVAIMLGASAGFINPFSYQCNLMVYAAGNYSVREFAIIGAPFQIWLMIVAGFILCYMKEWHQVWIVSWICTAGIVLLPALYFLLPTKVQLRIDAFFDRVAQTLNPKLIIERRNSIRRQASRTGSDGTGSSDSPRALGVPKVITA.

The next 6 helical transmembrane spans lie at 3 to 23, 30 to 50, 60 to 80, 106 to 126, 139 to 159, and 185 to 205; these read FGWQ…VMAA, VTFT…VTVA, GLLT…TGGL, MCLS…PILI, LLIP…IGTS, and IFDI…FILL. 4 consecutive RCK C-terminal domains span residues 211–295, 317–401, 406–491, and 497–583; these read LPGN…EFGL, VFTP…SKNN, VRAV…FPGL, and EQVD…DKSF. The next 6 helical transmembrane spans lie at 600-620, 624-644, 657-677, 693-713, 774-794, and 802-822; these read MVIG…GGLK, YIHL…TGCM, VYLT…TGVA, SDGA…ELLT, FAII…FILC, and VWIV…LYFL. The segment at 857–883 is disordered; that stretch reads QASRTGSDGTGSSDSPRALGVPKVITA. Residues 861–871 show a composition bias toward low complexity; the sequence is TGSDGTGSSDS.

This sequence belongs to the divalent anion:Na+ symporter (DASS) superfamily. Na+/sulfate symporter (TC 2.A.47.4) family.

The protein resides in the cell membrane. In terms of biological role, na(+)/sulfate cotransporter with a probable high-affinity for sulfate and a proteasome dependent turnover. This Chlamydomonas reinhardtii (Chlamydomonas smithii) protein is Sodium/sulfate cotransporter 2 (SLT2).